Here is a 585-residue protein sequence, read N- to C-terminus: Cytidine monophosphate-N-acetylneuraminic acid hydroxylase (585 aa).

One can recognise a Rieske domain in the interval 9–107 (LSPVEVANLK…VEMDENNRLL (99 aa)). [2Fe-2S] cluster-binding residues include cysteine 49, histidine 51, cysteine 70, and histidine 73.

It belongs to the CMP-Neu5Ac hydroxylase family. It depends on [2Fe-2S] cluster as a cofactor.

It localises to the cytoplasm. The enzyme catalyses CMP-N-acetyl-beta-neuraminate + 2 Fe(II)-[cytochrome b5] + O2 + 2 H(+) = CMP-N-glycoloyl-beta-neuraminate + 2 Fe(III)-[cytochrome b5] + H2O. It participates in amino-sugar metabolism; N-acetylneuraminate metabolism. Functionally, sialic acids are components of carbohydrate chains of glycoconjugates and are involved in cell-cell recognition and cell-pathogen interactions. Catalyzes the conversion of CMP-N-acetylneuraminic acid (CMP-Neu5Ac) into its hydroxylated derivative CMP-N-glycolylneuraminic acid (CMP-Neu5Gc), a sialic acid abundantly expressed at the surface of many cells. In Pongo pygmaeus (Bornean orangutan), this protein is Cytidine monophosphate-N-acetylneuraminic acid hydroxylase (CMAH).